Here is a 442-residue protein sequence, read N- to C-terminus: Kelch domain-containing protein 10 (442 aa).

The disordered stretch occupies residues 1-58 (MSAAQGWDRNRRRGGGAAGGGGGGSGAGGGSGGNGGRGTGQLNRFVQLSGRPHLPGKK). An Omega-N-methylarginine modification is found at R13. A compositionally biased stretch (gly residues) spans 15–39 (GGAAGGGGGGSGAGGGSGGNGGRGT). 6 Kelch repeats span residues 87–154 (RPPP…PREL), 155–198 (ASMS…ALLS), 199–260 (CRGK…PEER), 261–319 (YRHE…RRCH), 320–364 (SCVQ…PEPV), and 365–403 (YFHC…LVVP). The interval 401–442 (VVPSLLELAWEKLLAAFPNLANLSRTQLLHLGLTQGLIERLK) is interaction with CUL2.

Belongs to the KLHDC10 family. Component of a CRL2 E3 ubiquitin-protein ligase complex, also named ECS (Elongin BC-CUL2/5-SOCS-box protein) complex, composed of CUL2, Elongin BC (ELOB and ELOC), RBX1 and substrate-specific adapter KLHDC10. Interacts (via the 6 Kelch repeats) with PPP5C.

Its subcellular location is the nucleus. The protein resides in the cytoplasm. It participates in protein modification; protein ubiquitination. Functionally, substrate-recognition component of a Cul2-RING (CRL2) E3 ubiquitin-protein ligase complex of the DesCEND (destruction via C-end degrons) pathway, which recognizes a C-degron located at the extreme C-terminus of target proteins, leading to their ubiquitination and degradation. The C-degron recognized by the DesCEND pathway is usually a motif of less than ten residues and can be present in full-length proteins, truncated proteins or proteolytically cleaved forms. The CRL2(KLHDC10) complex specifically recognizes proteins with a proline-glycine (Pro-Gly) or an alanine tail (CAT tail) at the C-terminus, leading to their ubiquitination and degradation. The CRL2(KLHDC10) complex is involved in the ribosome-associated quality control (RQC) pathway, which mediates the extraction of incompletely synthesized nascent chains from stalled ribosomes: CRL2(KLHDC10) acts downstream of NEMF and recognizes CAT tails associated with stalled nascent chains, leading to their ubiquitination and degradation. Participates in the oxidative stress-induced cell death through MAP3K5 activation. Inhibits PPP5C phosphatase activity on MAP3K5. Acts as a regulator of necroptosis. This chain is Kelch domain-containing protein 10 (KLHDC10), found in Bos taurus (Bovine).